The chain runs to 185 residues: Ribosome-recycling factor (185 aa).

This sequence belongs to the RRF family.

It is found in the cytoplasm. In terms of biological role, responsible for the release of ribosomes from messenger RNA at the termination of protein biosynthesis. May increase the efficiency of translation by recycling ribosomes from one round of translation to another. The polypeptide is Ribosome-recycling factor (Bacillus cereus (strain ATCC 10987 / NRS 248)).